The chain runs to 594 residues: Aspartate--tRNA(Asp/Asn) ligase (594 aa).

An L-aspartate-binding site is contributed by Glu-176. The segment at 200–203 is aspartate; that stretch reads QIFK. L-aspartate is bound at residue Arg-222. ATP contacts are provided by residues 222–224 and Gln-231; that span reads RDE. His-450 contacts L-aspartate. Glu-484 is a binding site for ATP. Arg-491 contributes to the L-aspartate binding site. An ATP-binding site is contributed by 536-539; that stretch reads GLDR.

It belongs to the class-II aminoacyl-tRNA synthetase family. Type 1 subfamily. Homodimer.

The protein localises to the cytoplasm. It carries out the reaction tRNA(Asx) + L-aspartate + ATP = L-aspartyl-tRNA(Asx) + AMP + diphosphate. Functionally, aspartyl-tRNA synthetase with relaxed tRNA specificity since it is able to aspartylate not only its cognate tRNA(Asp) but also tRNA(Asn). Reaction proceeds in two steps: L-aspartate is first activated by ATP to form Asp-AMP and then transferred to the acceptor end of tRNA(Asp/Asn). This is Aspartate--tRNA(Asp/Asn) ligase from Geobacillus sp. (strain WCH70).